A 252-amino-acid polypeptide reads, in one-letter code: 3-dehydroquinate dehydratase (252 aa).

Residues Ser-21, 46–48 (EWR), and Arg-82 contribute to the 3-dehydroquinate site. The active-site Proton donor/acceptor is His-143. Lys-170 serves as the catalytic Schiff-base intermediate with substrate. Arg-213, Ser-232, and Gln-236 together coordinate 3-dehydroquinate.

The protein belongs to the type-I 3-dehydroquinase family. In terms of assembly, homodimer.

The enzyme catalyses 3-dehydroquinate = 3-dehydroshikimate + H2O. Its pathway is metabolic intermediate biosynthesis; chorismate biosynthesis; chorismate from D-erythrose 4-phosphate and phosphoenolpyruvate: step 3/7. Involved in the third step of the chorismate pathway, which leads to the biosynthesis of aromatic amino acids. Catalyzes the cis-dehydration of 3-dehydroquinate (DHQ) and introduces the first double bond of the aromatic ring to yield 3-dehydroshikimate. The chain is 3-dehydroquinate dehydratase from Escherichia coli O139:H28 (strain E24377A / ETEC).